A 217-amino-acid polypeptide reads, in one-letter code: N-(5'-phosphoribosyl)anthranilate isomerase (217 aa).

The protein belongs to the TrpF family.

It carries out the reaction N-(5-phospho-beta-D-ribosyl)anthranilate = 1-(2-carboxyphenylamino)-1-deoxy-D-ribulose 5-phosphate. It functions in the pathway amino-acid biosynthesis; L-tryptophan biosynthesis; L-tryptophan from chorismate: step 3/5. This chain is N-(5'-phosphoribosyl)anthranilate isomerase, found in Chlorobium luteolum (strain DSM 273 / BCRC 81028 / 2530) (Pelodictyon luteolum).